Reading from the N-terminus, the 85-residue chain is Putative defensin-like protein 79 (85 aa).

Residues 1–31 (MKSEKSADAYGTYFLLISTIFLLFIARQASS) form the signal peptide. Intrachain disulfides connect Cys-37–Cys-69, Cys-44–Cys-60, Cys-47–Cys-67, and Cys-51–Cys-68.

The protein belongs to the DEFL family.

It localises to the secreted. This chain is Putative defensin-like protein 79, found in Arabidopsis thaliana (Mouse-ear cress).